The following is a 61-amino-acid chain: Temporin-1Tb (61 aa).

Positions 1–22 (MFTLKKSLLLLFFLGTINLSLC) are cleaved as a signal peptide. Positions 23–44 (EEERNAEEERRDEPDERDVQVE) are excised as a propeptide. At L59 the chain carries Leucine amide.

This sequence belongs to the frog skin active peptide (FSAP) family. Temporin subfamily. As to quaternary structure, homo-oligomerizes in membranes as homodimers, homotrimers, or even homotetramers. Oligomerizes in presence of LPS. In Gram-positive bacterial mimetic membranes, the aggregation is weakly pronounced, and penetration proceeds more rapidly and is deeper than in Gram-negative bacterial mimetic membranes where aggregation is high. Homo-oligomerization is prevented by temporin-L. As to expression, expressed by the skin glands.

It is found in the secreted. The protein resides in the target cell membrane. It localises to the target cell. The protein localises to the target cell cytoplasm. In terms of biological role, amphipathic alpha-helical antimicrobial peptide with potent activity against Gram-positive bacteria, weak activity against Gram-negative bacteria, and moderate activity against fungi. Mainly acts by causing membrane permeabilization, but is unable to forme pore-like openings. Is also able to penetrate eukaryotic cells (keratinocytes), and kill intracellular S.aureus (both wild-type and MRSA) without injuring host cells. Shows inhibitory effect on biofilm formation of Gram-positive bacteria, but not of Gram-negative bacteria. Shows antiviral activity against herpes simplex virus 1 (HSV-1) by disrupting the viral envelope. Also displays anti-leishmania activity by damaging parasite membrane. Does not show hemolytic activity. Acts synergistically with temporin-L that improves temporin-1Tb activity by preventing its self-association in lipopolysaccharides (LPS). In vitro, promotes cell migration and wound healing. The chain is Temporin-1Tb from Rana temporaria (European common frog).